Here is a 212-residue protein sequence, read N- to C-terminus: Pyridoxine/pyridoxamine 5'-phosphate oxidase (212 aa).

Residues 7 to 10 (RRQY) and Lys65 each bind substrate. FMN contacts are provided by residues 60 to 65 (RIVLLK), 75 to 76 (FT), Arg81, Lys82, and Gln104. Substrate contacts are provided by Tyr122, Arg126, and Ser130. Residues 139–140 (QS) and Trp184 contribute to the FMN site. 190-192 (RLH) is a binding site for substrate. Arg194 serves as a coordination point for FMN.

It belongs to the pyridoxamine 5'-phosphate oxidase family. Homodimer. FMN serves as cofactor.

It catalyses the reaction pyridoxamine 5'-phosphate + O2 + H2O = pyridoxal 5'-phosphate + H2O2 + NH4(+). It carries out the reaction pyridoxine 5'-phosphate + O2 = pyridoxal 5'-phosphate + H2O2. Its pathway is cofactor metabolism; pyridoxal 5'-phosphate salvage; pyridoxal 5'-phosphate from pyridoxamine 5'-phosphate: step 1/1. The protein operates within cofactor metabolism; pyridoxal 5'-phosphate salvage; pyridoxal 5'-phosphate from pyridoxine 5'-phosphate: step 1/1. In terms of biological role, catalyzes the oxidation of either pyridoxine 5'-phosphate (PNP) or pyridoxamine 5'-phosphate (PMP) into pyridoxal 5'-phosphate (PLP). In Alteromonas mediterranea (strain DSM 17117 / CIP 110805 / LMG 28347 / Deep ecotype), this protein is Pyridoxine/pyridoxamine 5'-phosphate oxidase.